The primary structure comprises 331 residues: ATPase GET3 (331 aa).

Residue 32–39 coordinates ATP; that stretch reads KGGVGKTT. Aspartate 61 is an active-site residue. Residues glutamate 235 and asparagine 262 each coordinate ATP. 2 residues coordinate Zn(2+): cysteine 273 and cysteine 276.

This sequence belongs to the arsA ATPase family. Homodimer.

Its subcellular location is the cytoplasm. The protein localises to the endoplasmic reticulum. Functionally, ATPase required for the post-translational delivery of tail-anchored (TA) proteins to the endoplasmic reticulum. Recognizes and selectively binds the transmembrane domain of TA proteins in the cytosol. This complex then targets to the endoplasmic reticulum by membrane-bound receptors, where the tail-anchored protein is released for insertion. This process is regulated by ATP binding and hydrolysis. ATP binding drives the homodimer towards the closed dimer state, facilitating recognition of newly synthesized TA membrane proteins. ATP hydrolysis is required for insertion. Subsequently, the homodimer reverts towards the open dimer state, lowering its affinity for the membrane-bound receptor, and returning it to the cytosol to initiate a new round of targeting. The polypeptide is ATPase GET3 (Malassezia globosa (strain ATCC MYA-4612 / CBS 7966) (Dandruff-associated fungus)).